The primary structure comprises 391 residues: Glutamate 5-kinase (391 aa).

Residue Lys-17 coordinates ATP. Ser-57, Asp-144, and Asn-156 together coordinate substrate. Residues 176 to 177 and 216 to 222 each bind ATP; these read SD and TGGMTTK. A PUA domain is found at 278 to 356; that stretch reads QGQIVIDDGA…AWLAAEMGPA (79 aa). The disordered stretch occupies residues 370–391; the sequence is SRRRKAEPSSRNQKSSGSRVTS. Positions 378-391 are enriched in polar residues; sequence SSRNQKSSGSRVTS.

Belongs to the glutamate 5-kinase family.

It is found in the cytoplasm. It catalyses the reaction L-glutamate + ATP = L-glutamyl 5-phosphate + ADP. Its pathway is amino-acid biosynthesis; L-proline biosynthesis; L-glutamate 5-semialdehyde from L-glutamate: step 1/2. In terms of biological role, catalyzes the transfer of a phosphate group to glutamate to form L-glutamate 5-phosphate. This chain is Glutamate 5-kinase, found in Cutibacterium acnes (strain DSM 16379 / KPA171202) (Propionibacterium acnes).